We begin with the raw amino-acid sequence, 92 residues long: Large ribosomal subunit protein uL24 (92 aa).

It belongs to the universal ribosomal protein uL24 family. Part of the 50S ribosomal subunit.

Functionally, one of two assembly initiator proteins, it binds directly to the 5'-end of the 23S rRNA, where it nucleates assembly of the 50S subunit. In terms of biological role, one of the proteins that surrounds the polypeptide exit tunnel on the outside of the subunit. This Opitutus terrae (strain DSM 11246 / JCM 15787 / PB90-1) protein is Large ribosomal subunit protein uL24.